Reading from the N-terminus, the 386-residue chain is Probable pectin lyase F (386 aa).

A signal peptide spans 1–16; it reads MKTAVLSLLLALQAYA. C77 and C101 are oxidised to a cystine. N124 is a glycosylation site (N-linked (GlcNAc...) asparagine). R251 is a catalytic residue. A disulfide bond links C326 and C334.

The protein belongs to the polysaccharide lyase 1 family.

The protein localises to the secreted. The enzyme catalyses Eliminative cleavage of (1-&gt;4)-alpha-D-galacturonan methyl ester to give oligosaccharides with 4-deoxy-6-O-methyl-alpha-D-galact-4-enuronosyl groups at their non-reducing ends.. Pectinolytic enzymes consist of four classes of enzymes: pectin lyase, polygalacturonase, pectin methylesterase and rhamnogalacturonase. Among pectinolytic enzymes, pectin lyase is the most important in depolymerization of pectin, since it cleaves internal glycosidic bonds of highly methylated pectins. In Neosartorya fischeri (strain ATCC 1020 / DSM 3700 / CBS 544.65 / FGSC A1164 / JCM 1740 / NRRL 181 / WB 181) (Aspergillus fischerianus), this protein is Probable pectin lyase F (pelF).